The sequence spans 2027 residues: Dedicator of cytokinesis protein 3 (2027 aa).

In terms of domain architecture, SH3 spans 6–67 (EEEKYGVVIC…PANYIHLKKA (62 aa)). In terms of domain architecture, C2 DOCK-type spans 421–598 (RNDLYLTLEK…ESFFISTQLS (178 aa)). Residues 1225–1632 (KSEINKEEMY…LYHEFPGLDK (408 aa)) form the DOCKER domain. Ser-1655 bears the Phosphoserine mark. Disordered stretches follow at residues 1672-1695 (GTGR…MMMM), 1731-1768 (SSSQ…SLPD), 1846-1925 (DTPP…DEGL), and 1971-2027 (PPKP…RGEQ). Low complexity-rich tracts occupy residues 1676 to 1695 (HSSS…MMMM) and 1731 to 1751 (SSSQ…APSQ). Positions 1752–1763 (MITSAPSSTRGS) are enriched in polar residues. Residues 1877-1899 (GSNSTLSGSASSGVSSLSESNFG) show a composition bias toward low complexity. The SH3-binding motif lies at 1967–1973 (PPALPPK). Basic and acidic residues-rich tracts occupy residues 1981–1998 (ALEH…ERPR) and 2011–2027 (VKEE…RGEQ).

Belongs to the DOCK family. Interacts with presenilin proteins PSEN1 and PSEN2. Interacts with CRK. In terms of tissue distribution, expressed in brain, spinal cord, pituitary gland, testis. Not expressed in heart, liver, kidney, spleen and lung. In brain, it is highly expressed in the cerebral cortex and hippocampus, while it is absent in other tissues, except in spinal cord. In the cerebral cortex, it is found within the intermediate (III and IV) and deep (V and VI) layers, whereas it is weakly expressed in superficial layer I. It is also abundant in the piriform cortex. Within the hippocampus, it is expressed in the pyramidal neurons of the CA1, CA2, and CA3 regions and the dentate gyrus.

It is found in the cytoplasm. Functionally, potential guanine nucleotide exchange factor (GEF). GEF proteins activate some small GTPases by exchanging bound GDP for free GTP. Its interaction with presenilin proteins as well as its ability to stimulate Tau/MAPT phosphorylation suggest that it may be involved in Alzheimer disease. Ectopic expression in nerve cells decreases the secretion of amyloid-beta APBA1 protein and lowers the rate of cell-substratum adhesion, suggesting that it may affect the function of some small GTPase involved in the regulation of actin cytoskeleton or cell adhesion receptors. This chain is Dedicator of cytokinesis protein 3 (Dock3), found in Mus musculus (Mouse).